The sequence spans 199 residues: Holliday junction branch migration complex subunit RuvA (199 aa).

Residues 1-63 (MIASVRGEVL…EDSMTLYGFS (63 aa)) form a domain I region. The segment at 64–141 (DTESKDLFSL…DAVATTAGAA (78 aa)) is domain II. The flexible linker stretch occupies residues 141 to 145 (ASGAV). The domain III stretch occupies residues 146-199 (VGSSIRDQIVEALEGLGFPIKQAEQATDSVLAESPEATTSVALRSALSLLGKTR).

This sequence belongs to the RuvA family. Homotetramer. Forms an RuvA(8)-RuvB(12)-Holliday junction (HJ) complex. HJ DNA is sandwiched between 2 RuvA tetramers; dsDNA enters through RuvA and exits via RuvB. An RuvB hexamer assembles on each DNA strand where it exits the tetramer. Each RuvB hexamer is contacted by two RuvA subunits (via domain III) on 2 adjacent RuvB subunits; this complex drives branch migration. In the full resolvosome a probable DNA-RuvA(4)-RuvB(12)-RuvC(2) complex forms which resolves the HJ.

It is found in the cytoplasm. Functionally, the RuvA-RuvB-RuvC complex processes Holliday junction (HJ) DNA during genetic recombination and DNA repair, while the RuvA-RuvB complex plays an important role in the rescue of blocked DNA replication forks via replication fork reversal (RFR). RuvA specifically binds to HJ cruciform DNA, conferring on it an open structure. The RuvB hexamer acts as an ATP-dependent pump, pulling dsDNA into and through the RuvAB complex. HJ branch migration allows RuvC to scan DNA until it finds its consensus sequence, where it cleaves and resolves the cruciform DNA. This Rhodococcus erythropolis (strain PR4 / NBRC 100887) protein is Holliday junction branch migration complex subunit RuvA.